The following is a 349-amino-acid chain: Aquaporin-4 (349 aa).

The next 2 helical transmembrane spans lie at L92–A112 and A125–L147. The NPA 1 motif lies at N148–A150. Residues L167–I187 form a helical membrane-spanning segment. N194 and N207 each carry an N-linked (GlcNAc...) asparagine glycan. A run of 2 helical transmembrane segments spans residues G225–C245 and M256–A276. The short motif at N281–A283 is the NPA 2 element. A helical transmembrane segment spans residues W314–I334.

Belongs to the MIP/aquaporin (TC 1.A.8) family.

The protein localises to the cell membrane. In terms of biological role, aquaglyceroporin that may modulate the water content and osmolytes during anhydrobiosis. This is Aquaporin-4 from Milnesium tardigradum (Water bear).